We begin with the raw amino-acid sequence, 388 residues long: RNA binding motif protein, X-linked-like-1 (388 aa).

Residues 8-86 enclose the RRM domain; that stretch reads GKLFIGGLNT…KAIKVEQATK (79 aa). Residues 61–80 are compositionally biased toward basic and acidic residues; the sequence is DAKDVARDMNGKSLDGKAIK. A disordered region spans residues 61 to 388; that stretch reads DAKDVARDMN…SDRGGGQKQI (328 aa). A Glycyl lysine isopeptide (Lys-Gly) (interchain with G-Cter in SUMO2) cross-link involves residue K80. S88 bears the Phosphoserine mark. Residues 148–161 show a composition bias toward pro residues; that stretch reads RGPPPRSGGPPPKR. Basic and acidic residues-rich tracts occupy residues 191 to 212 and 238 to 271; these read PRRE…DGYS and YTYR…EYSD. A compositionally biased stretch (low complexity) spans 320–332; the sequence is SRDSYSSSRSDLY. Composition is skewed to basic and acidic residues over residues 333–344 and 377–388; these read SSDRDRVGRQER and SRSDRGGGQKQI.

The protein resides in the nucleus. Its function is as follows. RNA-binding protein which may be involved in pre-mRNA splicing. This Rattus norvegicus (Rat) protein is RNA binding motif protein, X-linked-like-1 (Rbmxl1).